The following is a 932-amino-acid chain: Chaperone protein ClpC3, chloroplastic (932 aa).

Positions 1 to 20 (MERTLLNPPPSLRSPACRTT) are disordered. Residues 1–48 (MERTLLNPPPSLRSPACRTTTATRIRPSSSMATMIPTPPPMRHARLVK) constitute a chloroplast transit peptide. The Clp R domain maps to 99–240 (FDMFTDKAIK…RSEVIRMISD (142 aa)). Repeat stretches follow at residues 102–167 (FTDK…AGRG) and 177–240 (FTPA…MISD). Residues 264–511 (LLEYGTNLTK…LVRLRNAQLP (248 aa)) form an i region. Residue 309–316 (GEPGVGKT) coordinates ATP. Residues 518 to 553 (EKKLKKIMAEKSEAIRSQDFEKAGALRGEEVELKSE) enclose the UVR domain. The tract at residues 579–770 (VTEADVQHIV…LIIMTSNVGS (192 aa)) is II. Position 653-660 (653-660 (GPTGVGKS)) interacts with ATP.

This sequence belongs to the ClpA/ClpB family. ClpC subfamily.

It localises to the plastid. The protein localises to the chloroplast. Functionally, molecular chaperone that may interact with a ClpP-like protease involved in degradation of denatured proteins in the chloroplast. This Oryza sativa subsp. japonica (Rice) protein is Chaperone protein ClpC3, chloroplastic (CLPC3).